A 473-amino-acid chain; its full sequence is Photosystem II CP43 reaction center protein (473 aa).

A propeptide spanning residues Met-1 to Glu-14 is cleaved from the precursor. N-acetylthreonine is present on Thr-15. Thr-15 is subject to Phosphothreonine. 5 consecutive transmembrane segments (helical) span residues Leu-69–Ala-93, Leu-134–Asn-155, Lys-178–Thr-200, Lys-255–Ser-275, and Trp-291–Ala-312. Position 367 (Glu-367) interacts with [CaMn4O5] cluster. The chain crosses the membrane as a helical span at residues Arg-447–Pro-471.

It belongs to the PsbB/PsbC family. PsbC subfamily. In terms of assembly, PSII is composed of 1 copy each of membrane proteins PsbA, PsbB, PsbC, PsbD, PsbE, PsbF, PsbH, PsbI, PsbJ, PsbK, PsbL, PsbM, PsbT, PsbX, PsbY, PsbZ, Psb30/Ycf12, at least 3 peripheral proteins of the oxygen-evolving complex and a large number of cofactors. It forms dimeric complexes. Binds multiple chlorophylls and provides some of the ligands for the Ca-4Mn-5O cluster of the oxygen-evolving complex. It may also provide a ligand for a Cl- that is required for oxygen evolution. PSII binds additional chlorophylls, carotenoids and specific lipids. is required as a cofactor.

It is found in the plastid. The protein localises to the chloroplast thylakoid membrane. Its function is as follows. One of the components of the core complex of photosystem II (PSII). It binds chlorophyll and helps catalyze the primary light-induced photochemical processes of PSII. PSII is a light-driven water:plastoquinone oxidoreductase, using light energy to abstract electrons from H(2)O, generating O(2) and a proton gradient subsequently used for ATP formation. This is Photosystem II CP43 reaction center protein from Angiopteris evecta (Mule's foot fern).